The chain runs to 138 residues: MRTLWIMAVLLLGVEGGLWQFENMIMKVAKKSGILSYSAYGCYCGWGGRGTPKDATDRCCFVHDCCYGKVTGCNPKLGKYTYISENGDIICGGDGPCKEVCECDRAAAICFRDNLDTYDRKTYWKYPASNCQEDSEPC.

A signal peptide spans 1 to 16; sequence MRTLWIMAVLLLGVEG. Intrachain disulfides connect Cys-42-Cys-131, Cys-44-Cys-60, Cys-59-Cys-110, Cys-65-Cys-138, Cys-66-Cys-103, Cys-73-Cys-97, and Cys-91-Cys-101. Tyr-43, Gly-45, and Gly-47 together coordinate Ca(2+). His-63 is an active-site residue. Asp-64 is a Ca(2+) binding site. Asp-104 is a catalytic residue.

The protein belongs to the phospholipase A2 family. Group II subfamily. D49 sub-subfamily. It depends on Ca(2+) as a cofactor. As to expression, expressed by the venom gland.

It is found in the secreted. It carries out the reaction a 1,2-diacyl-sn-glycero-3-phosphocholine + H2O = a 1-acyl-sn-glycero-3-phosphocholine + a fatty acid + H(+). PLA2 catalyzes the calcium-dependent hydrolysis of the 2-acyl groups in 3-sn-phosphoglycerides. The protein is Acidic phospholipase A2 PePLA2 of Protobothrops elegans (Elegant pitviper).